We begin with the raw amino-acid sequence, 198 residues long: MSISMDQVKELRERTGAGILDCKKALTDTSGDVDAAIKILREKGLAAAAKKSSRDASDGRIEVYVHPGNKVVAIVEVNCETDFVAKTDDFKKLAYDLALHVAATNPSYVNREEVPAAEVEREREILRQQNVDSGKPANIVEKIVEGRIEKFYGEIVLLEQEFVKDPSVKIKDLVQEAIAKLGENIVVRRFSRFEVGSN.

Residues 81–84 (TDFV) form an involved in Mg(2+) ion dislocation from EF-Tu region.

Belongs to the EF-Ts family.

Its subcellular location is the cytoplasm. Its function is as follows. Associates with the EF-Tu.GDP complex and induces the exchange of GDP to GTP. It remains bound to the aminoacyl-tRNA.EF-Tu.GTP complex up to the GTP hydrolysis stage on the ribosome. The protein is Elongation factor Ts of Herpetosiphon aurantiacus (strain ATCC 23779 / DSM 785 / 114-95).